A 169-amino-acid chain; its full sequence is S-ribosylhomocysteine lyase (169 aa).

3 residues coordinate Fe cation: H54, H58, and C128.

The protein belongs to the LuxS family. Homodimer. Requires Fe cation as cofactor.

The catalysed reaction is S-(5-deoxy-D-ribos-5-yl)-L-homocysteine = (S)-4,5-dihydroxypentane-2,3-dione + L-homocysteine. In terms of biological role, involved in the synthesis of autoinducer 2 (AI-2) which is secreted by bacteria and is used to communicate both the cell density and the metabolic potential of the environment. The regulation of gene expression in response to changes in cell density is called quorum sensing. Catalyzes the transformation of S-ribosylhomocysteine (RHC) to homocysteine (HC) and 4,5-dihydroxy-2,3-pentadione (DPD). This Aeromonas hydrophila subsp. hydrophila (strain ATCC 7966 / DSM 30187 / BCRC 13018 / CCUG 14551 / JCM 1027 / KCTC 2358 / NCIMB 9240 / NCTC 8049) protein is S-ribosylhomocysteine lyase.